A 160-amino-acid chain; its full sequence is Transcription elongation factor GreA (160 aa).

A coiled-coil region spans residues Met-1–Arg-72.

Belongs to the GreA/GreB family.

Necessary for efficient RNA polymerase transcription elongation past template-encoded arresting sites. The arresting sites in DNA have the property of trapping a certain fraction of elongating RNA polymerases that pass through, resulting in locked ternary complexes. Cleavage of the nascent transcript by cleavage factors such as GreA or GreB allows the resumption of elongation from the new 3'terminus. GreA releases sequences of 2 to 3 nucleotides. The protein is Transcription elongation factor GreA of Streptococcus pneumoniae (strain Hungary19A-6).